The following is a 474-amino-acid chain: Variant surface glycoprotein MITAT 1.5 (474 aa).

An N-terminal signal peptide occupies residues Met1–Gly22. Cystine bridges form between Cys37–Cys161 and Cys144–Cys214. N-linked (GlcNAc...) asparagine glycans are attached at residues Asn74 and Asn95. The N-linked (GlcNAc...) asparagine glycan is linked to Asn329. Residues Ala388–Cys449 form a disordered region. Composition is skewed to basic and acidic residues over residues Thr414 to Asn423 and Lys435 to Cys449. Asn451 is lipidated: GPI-anchor amidated asparagine. Residues Gly452 to Phe474 constitute a propeptide, removed in mature form.

Its subcellular location is the cell membrane. In terms of biological role, VSG forms a coat on the surface of the parasite. The trypanosome evades the immune response of the host by expressing a series of antigenically distinct VSGs from an estimated 1000 VSG genes. The polypeptide is Variant surface glycoprotein MITAT 1.5 (Trypanosoma brucei brucei).